The chain runs to 1274 residues: Regulator of telomere elongation helicase 1 (1274 aa).

Residues 7–296 (NGVTVDFPFQ…ARVAQHGELQ (290 aa)) enclose the Helicase ATP-binding domain. 42 to 49 (SPTGTGKT) serves as a coordination point for ATP. Residues Cys145, Cys163, Cys172, and Cys207 each coordinate [4Fe-4S] cluster. The Nuclear localization signal motif lies at 151–167 (KKQESNHMQISLCRKKV). A DEAH box motif is present at residues 250–253 (DEAH). Residues 871 to 877 (QRGGKKK) carry the Nuclear localization signal motif. Disordered regions lie at residues 982–1002 (NSLPFGEQAQSTASKQGRREL), 1014–1038 (RQLDPGEHLNQGWPHLSTHLTSKGD), and 1143–1198 (ELPC…DDTI). Positions 1186–1196 (QRPDQSARSDD) are enriched in basic and acidic residues.

Belongs to the helicase family. RAD3/XPD subfamily. In terms of assembly, interacts with TERF1. Interacts (via PIP-box) with PCNA; the interaction is direct and essential for suppressing telomere fragility. Interacts with MMS19; the interaction mediates the association of RTEL1 with the cytosolic iron-sulfur protein assembly (CIA) complex.

It localises to the nucleus. The catalysed reaction is ATP + H2O = ADP + phosphate + H(+). In terms of biological role, a probable ATP-dependent DNA helicase implicated in telomere-length regulation, DNA repair and the maintenance of genomic stability. Acts as an anti-recombinase to counteract toxic recombination and limit crossover during meiosis. Regulates meiotic recombination and crossover homeostasis by physically dissociating strand invasion events and thereby promotes noncrossover repair by meiotic synthesis dependent strand annealing (SDSA) as well as disassembly of D loop recombination intermediates. Also disassembles T loops and prevents telomere fragility by counteracting telomeric G4-DNA structures, which together ensure the dynamics and stability of the telomere. The polypeptide is Regulator of telomere elongation helicase 1 (Rtel1) (Rattus norvegicus (Rat)).